We begin with the raw amino-acid sequence, 459 residues long: UDP-N-acetylmuramate--L-alanine ligase (459 aa).

118–124 lines the ATP pocket; sequence GTHGKTT.

The protein belongs to the MurCDEF family.

It localises to the cytoplasm. The catalysed reaction is UDP-N-acetyl-alpha-D-muramate + L-alanine + ATP = UDP-N-acetyl-alpha-D-muramoyl-L-alanine + ADP + phosphate + H(+). It participates in cell wall biogenesis; peptidoglycan biosynthesis. Its function is as follows. Cell wall formation. In Agathobacter rectalis (strain ATCC 33656 / DSM 3377 / JCM 17463 / KCTC 5835 / VPI 0990) (Eubacterium rectale), this protein is UDP-N-acetylmuramate--L-alanine ligase.